The sequence spans 434 residues: Nicotinate phosphoribosyltransferase (434 aa).

H242 is subject to Phosphohistidine; by autocatalysis.

This sequence belongs to the NAPRTase family. Post-translationally, transiently phosphorylated on a His residue during the reaction cycle. Phosphorylation strongly increases the affinity for substrates and increases the rate of nicotinate D-ribonucleotide production. Dephosphorylation regenerates the low-affinity form of the enzyme, leading to product release.

The catalysed reaction is nicotinate + 5-phospho-alpha-D-ribose 1-diphosphate + ATP + H2O = nicotinate beta-D-ribonucleotide + ADP + phosphate + diphosphate. It functions in the pathway cofactor biosynthesis; NAD(+) biosynthesis; nicotinate D-ribonucleotide from nicotinate: step 1/1. Catalyzes the synthesis of beta-nicotinate D-ribonucleotide from nicotinate and 5-phospho-D-ribose 1-phosphate at the expense of ATP. This chain is Nicotinate phosphoribosyltransferase, found in Sinorhizobium fredii (strain NBRC 101917 / NGR234).